A 236-amino-acid chain; its full sequence is Small ribosomal subunit protein uS3 (236 aa).

A KH type-2 domain is found at 39 to 107 (IRLYVLEELK…ETSLNIVEIH (69 aa)).

The protein belongs to the universal ribosomal protein uS3 family. In terms of assembly, part of the 30S ribosomal subunit. Forms a tight complex with proteins S10 and S14.

Functionally, binds the lower part of the 30S subunit head. Binds mRNA in the 70S ribosome, positioning it for translation. The chain is Small ribosomal subunit protein uS3 from Bartonella quintana (strain Toulouse) (Rochalimaea quintana).